The chain runs to 371 residues: Aminomethyltransferase (371 aa).

This sequence belongs to the GcvT family. As to quaternary structure, the glycine cleavage system is composed of four proteins: P, T, L and H.

The enzyme catalyses N(6)-[(R)-S(8)-aminomethyldihydrolipoyl]-L-lysyl-[protein] + (6S)-5,6,7,8-tetrahydrofolate = N(6)-[(R)-dihydrolipoyl]-L-lysyl-[protein] + (6R)-5,10-methylene-5,6,7,8-tetrahydrofolate + NH4(+). Functionally, the glycine cleavage system catalyzes the degradation of glycine. In Pectobacterium atrosepticum (strain SCRI 1043 / ATCC BAA-672) (Erwinia carotovora subsp. atroseptica), this protein is Aminomethyltransferase.